The primary structure comprises 383 residues: 3-dehydroquinate synthase (383 aa).

Residues 81 to 86 (EGEVSK), 115 to 119 (GVVGD), 139 to 140 (TS), Lys-152, and Lys-161 contribute to the NAD(+) site. Residues Glu-194, His-256, and His-274 each coordinate Zn(2+).

Belongs to the sugar phosphate cyclases superfamily. Dehydroquinate synthase family. It depends on Co(2+) as a cofactor. Zn(2+) serves as cofactor. The cofactor is NAD(+).

It is found in the cytoplasm. The catalysed reaction is 7-phospho-2-dehydro-3-deoxy-D-arabino-heptonate = 3-dehydroquinate + phosphate. Its pathway is metabolic intermediate biosynthesis; chorismate biosynthesis; chorismate from D-erythrose 4-phosphate and phosphoenolpyruvate: step 2/7. Catalyzes the conversion of 3-deoxy-D-arabino-heptulosonate 7-phosphate (DAHP) to dehydroquinate (DHQ). The protein is 3-dehydroquinate synthase of Nitrobacter hamburgensis (strain DSM 10229 / NCIMB 13809 / X14).